The chain runs to 240 residues: Nicotinamide riboside kinase (240 aa).

Position 13–21 (13–21) interacts with ATP; it reads GCSSSGKTT. Mg(2+)-binding residues include T20 and D39. The active-site Proton acceptor is the D39. Residues 39–42 and 59–60 each bind substrate; these read DDFY and WD. Residue R158 participates in ATP binding. Substrate is bound by residues R159 and 164 to 165; that span reads GY. ATP contacts are provided by residues 162–164 and 208–210; these read RKG and KSK.

It belongs to the uridine kinase family. NRK subfamily.

It carries out the reaction beta-nicotinamide D-riboside + ATP = beta-nicotinamide D-ribonucleotide + ADP + H(+). It catalyses the reaction beta-D-ribosylnicotinate + ATP = nicotinate beta-D-ribonucleotide + ADP + H(+). It participates in cofactor biosynthesis; NAD(+) biosynthesis. Functionally, catalyzes the phosphorylation of nicotinamide riboside (NR) and nicotinic acid riboside (NaR) to form nicotinamide mononucleotide (NMN) and nicotinic acid mononucleotide (NaMN). The polypeptide is Nicotinamide riboside kinase (NRK1) (Saccharomyces cerevisiae (strain ATCC 204508 / S288c) (Baker's yeast)).